Consider the following 663-residue polypeptide: Probable receptor-like protein kinase At1g49730 (663 aa).

A signal peptide spans 1 to 25 (MVVNSQAFLLALIALLATQLPSLMA). The Extracellular segment spans residues 26 to 254 (ADCPLDFSGS…TNPYHLTMVP (229 aa)). N-linked (GlcNAc...) asparagine glycosylation is found at Asn-36, Asn-46, Asn-70, Asn-101, and Asn-171. The disordered stretch occupies residues 213–243 (SFSPVASPEPSPSTVGGISPSNSDSQMTTSR). Residues 224–243 (PSTVGGISPSNSDSQMTTSR) are compositionally biased toward polar residues. A helical membrane pass occupies residues 255 to 275 (TIGIVVTAVALTMLVVLVILI). At 276–663 (RRKNRELDES…PHSPINGFSF (388 aa)) the chain is on the cytoplasmic side. One can recognise a Protein kinase domain in the interval 327–609 (NDFNTVIGQG…ESCDPVHSAF (283 aa)). ATP is bound by residues 333–341 (IGQGGFGTV) and Lys-355. Asp-451 serves as the catalytic Proton acceptor. The interval 631 to 663 (RGDSRIFGPSSSTTSRSHYSRSLPHSPINGFSF) is disordered. Residues 640 to 652 (SSSTTSRSHYSRS) are compositionally biased toward low complexity.

Belongs to the protein kinase superfamily. Ser/Thr protein kinase family.

It localises to the cell membrane. The enzyme catalyses L-seryl-[protein] + ATP = O-phospho-L-seryl-[protein] + ADP + H(+). It catalyses the reaction L-threonyl-[protein] + ATP = O-phospho-L-threonyl-[protein] + ADP + H(+). In Arabidopsis thaliana (Mouse-ear cress), this protein is Probable receptor-like protein kinase At1g49730.